The primary structure comprises 336 residues: UPF0324 membrane protein spr0034 (336 aa).

Helical transmembrane passes span 65–84 (LLQYAVVLLGFGLNISQVFA), 91–113 (PVILSTISIALIIAYLFQRFFAL), 118–140 (ATLVGVGSSICGGSAIAATAPVI), 153–175 (VIFFFNVLAALIFPTLGTWLHLS), 211–233 (SATIVKLTRTLAIIPITLFLSYW), 249–271 (VFPLFILYFILASLLTTLLTSLG), 286–305 (FLIVMAMSAIGLKTNLVAMV), and 312–334 (ILLGAICWIAIILTTLGMQTLIG).

The protein belongs to the UPF0324 family.

It localises to the cell membrane. This is UPF0324 membrane protein spr0034 from Streptococcus pneumoniae (strain ATCC BAA-255 / R6).